Reading from the N-terminus, the 150-residue chain is MLKKDATYYIVEESVLPEVFLKVIKAKELLEKGEVKAVNEAVRLVGISRSAFYKYKDCIFPFFESSRGKIITLALVLQDVPGILSKILNIISDTNANILTINQNIPLGGIATVTISIRTSDMTKSVKELIQEIERVDGVKKIEILGREEY.

Residues 72–147 (TLALVLQDVP…GVKKIEILGR (76 aa)) enclose the ACT domain.

The protein belongs to the UPF0735 family.

The chain is UPF0735 ACT domain-containing protein Csac_0995 from Caldicellulosiruptor saccharolyticus (strain ATCC 43494 / DSM 8903 / Tp8T 6331).